A 210-amino-acid chain; its full sequence is GRF1-interacting factor 1 (210 aa).

Over residues 135 to 152 the composition is skewed to low complexity; it reads ATLQHQQLHHSQLGMSSS. Positions 135–210 are disordered; that stretch reads ATLQHQQLHH…LYLKSSDDGN (76 aa). The span at 182–198 shows a compositional bias: gly residues; the sequence is GSGGGGEGRGGSSGDGG.

Belongs to the SS18 family. Interacts with GRF1, GRF2, GRF5 and GRF9. As to expression, strongly expressed in actively growing and developing tissues, such as roots, upper stems, and shoot tips and flower buds. Also expressed in mature flowers. Not expressed in the shoot apical meristem (SAM). Highly accumulated in the proximal part of leaf primordia, in the key proliferative zone at the junction region between the leaf blade and leaf petiole.

Transcription coactivator that plays a role in the regulation of cell expansion in leaf and cotyledons tissues. Component of a network formed by miR396, the GRFs and their interacting factors (GIFs) acting in the regulation of meristem function, at least partially through the control of cell proliferation. Appears to function synergistically with GRF1 as a transcriptional coactivator. Acts together with GRF5 for the development of appropriate leaf size and shape through the promotion and/or maintenance of cell proliferation activity in leaf primordia. Plays a role in adaxial/abaxial patterning and growth in leaf morphogenesis. GIFs are involved in the positive regulation of cell proliferation of lateral organs in a functionally redundant manner. Together with GATA18/HAN, mediates cotyledon identity by preventing ectopic root formation through the repression of PLT1 expression. The polypeptide is GRF1-interacting factor 1 (Arabidopsis thaliana (Mouse-ear cress)).